A 129-amino-acid polypeptide reads, in one-letter code: M-zodatoxin-Lt8e (129 aa).

The first 20 residues, 1–20 (MKYFVVALALVAAFVCIAES), serve as a signal peptide directing secretion. Positions 21–60 (KPAESEHELAEVEEENELADLEDAVWLEHLADLSDLEEAR) are excised as a propeptide. Positions 57–60 (EEAR) match the Processing quadruplet motif motif.

Cleavage of the propeptide depends on the processing quadruplet motif (XXXR, with at least one of X being E). As to expression, expressed by the venom gland.

It localises to the secreted. Its function is as follows. Insecticidal, cytolytic and antimicrobial peptide. Forms voltage-dependent, ion-permeable channels in membranes. At high concentration causes cell membrane lysis. This is M-zodatoxin-Lt8e (cit 1-5) from Lachesana tarabaevi (Spider).